Consider the following 272-residue polypeptide: Shikimate dehydrogenase (NADP(+)) (272 aa).

Residues 14–16 and T61 each bind shikimate; that span reads SKS. K65 serves as the catalytic Proton acceptor. Residue E77 participates in NADP(+) binding. Residues N86 and D102 each contribute to the shikimate site. Residues 126–130, 149–154, and M213 each bind NADP(+); these read GAGGA and NRTVSR. Position 215 (Y215) interacts with shikimate. Residue G237 coordinates NADP(+).

It belongs to the shikimate dehydrogenase family. As to quaternary structure, homodimer.

The catalysed reaction is shikimate + NADP(+) = 3-dehydroshikimate + NADPH + H(+). The protein operates within metabolic intermediate biosynthesis; chorismate biosynthesis; chorismate from D-erythrose 4-phosphate and phosphoenolpyruvate: step 4/7. Its function is as follows. Involved in the biosynthesis of the chorismate, which leads to the biosynthesis of aromatic amino acids. Catalyzes the reversible NADPH linked reduction of 3-dehydroshikimate (DHSA) to yield shikimate (SA). This chain is Shikimate dehydrogenase (NADP(+)), found in Shigella boydii serotype 18 (strain CDC 3083-94 / BS512).